Consider the following 157-residue polypeptide: Succinate dehydrogenase assembly factor 2-A, mitochondrial (157 aa).

A mitochondrion-targeting transit peptide spans 1 to 21 (MLRQVLSSTSVRRLLVSPTRC).

This sequence belongs to the SDHAF2 family. Interacts with the flavoprotein subunit within the SDH catalytic dimer.

The protein localises to the mitochondrion matrix. Functionally, plays an essential role in the assembly of succinate dehydrogenase (SDH), an enzyme complex (also referred to as respiratory complex II) that is a component of both the tricarboxylic acid (TCA) cycle and the mitochondrial electron transport chain, and which couples the oxidation of succinate to fumarate with the reduction of ubiquinone (coenzyme Q) to ubiquinol. Required for flavinylation (covalent attachment of FAD) of the flavoprotein subunit of the SDH catalytic dimer. The sequence is that of Succinate dehydrogenase assembly factor 2-A, mitochondrial from Drosophila mojavensis (Fruit fly).